Consider the following 478-residue polypeptide: Aspartyl/glutamyl-tRNA(Asn/Gln) amidotransferase subunit B 1 (478 aa).

This sequence belongs to the GatB/GatE family. GatB subfamily. Heterotrimer of A, B and C subunits.

The catalysed reaction is L-glutamyl-tRNA(Gln) + L-glutamine + ATP + H2O = L-glutaminyl-tRNA(Gln) + L-glutamate + ADP + phosphate + H(+). It catalyses the reaction L-aspartyl-tRNA(Asn) + L-glutamine + ATP + H2O = L-asparaginyl-tRNA(Asn) + L-glutamate + ADP + phosphate + 2 H(+). Its function is as follows. Allows the formation of correctly charged Asn-tRNA(Asn) or Gln-tRNA(Gln) through the transamidation of misacylated Asp-tRNA(Asn) or Glu-tRNA(Gln) in organisms which lack either or both of asparaginyl-tRNA or glutaminyl-tRNA synthetases. The reaction takes place in the presence of glutamine and ATP through an activated phospho-Asp-tRNA(Asn) or phospho-Glu-tRNA(Gln). This is Aspartyl/glutamyl-tRNA(Asn/Gln) amidotransferase subunit B 1 from Syntrophus aciditrophicus (strain SB).